A 98-amino-acid polypeptide reads, in one-letter code: MQMTMINMILAFIMATTGLLMFRSHFMSSLLCLEGMMLSIFILMSISTLNFNNSLAMMFPLVLLVFAACEAAIGLSLLVKISNTYGTDYVQNLNLLQC.

3 helical membrane passes run 2–22 (QMTM…LLMF), 26–46 (FMSS…LMSI), and 59–79 (FPLV…SLLV).

This sequence belongs to the complex I subunit 4L family. As to quaternary structure, core subunit of respiratory chain NADH dehydrogenase (Complex I) which is composed of 45 different subunits.

Its subcellular location is the mitochondrion inner membrane. The enzyme catalyses a ubiquinone + NADH + 5 H(+)(in) = a ubiquinol + NAD(+) + 4 H(+)(out). Functionally, core subunit of the mitochondrial membrane respiratory chain NADH dehydrogenase (Complex I) which catalyzes electron transfer from NADH through the respiratory chain, using ubiquinone as an electron acceptor. Part of the enzyme membrane arm which is embedded in the lipid bilayer and involved in proton translocation. The polypeptide is NADH-ubiquinone oxidoreductase chain 4L (MT-ND4L) (Echinosorex gymnura (Moon rat)).